The following is a 259-amino-acid chain: 5'-nucleotidase SurE (259 aa).

Aspartate 8, aspartate 9, serine 40, and asparagine 92 together coordinate a divalent metal cation.

This sequence belongs to the SurE nucleotidase family. A divalent metal cation serves as cofactor.

Its subcellular location is the cytoplasm. It catalyses the reaction a ribonucleoside 5'-phosphate + H2O = a ribonucleoside + phosphate. Its function is as follows. Nucleotidase that shows phosphatase activity on nucleoside 5'-monophosphates. The polypeptide is 5'-nucleotidase SurE (Xanthomonas campestris pv. campestris (strain B100)).